Consider the following 138-residue polypeptide: Protein E6 (138 aa).

Zinc fingers lie at residues 25–61 and 98–134; these read CNFC…CAAC and CLIC…CRHC.

Belongs to the papillomaviridae E6 protein family. As to quaternary structure, forms homodimers. Interacts with ubiquitin-protein ligase UBE3A/E6-AP; this interaction stimulates UBE3A ubiquitin activity. Interacts with host BAK1.

It is found in the host cytoplasm. The protein localises to the host nucleus. In terms of biological role, plays a major role in the induction and maintenance of cellular transformation. E6 associates with host UBE3A/E6-AP ubiquitin-protein ligase and modulates its activity. Protects host keratinocytes from apoptosis by mediating the degradation of host BAK1. May also inhibit host immune response. This Homo sapiens (Human) protein is Protein E6.